Here is a 185-residue protein sequence, read N- to C-terminus: Acireductone dioxygenase (185 aa).

Positions 96, 98, 102, and 140 each coordinate Fe(2+). Ni(2+)-binding residues include His96, His98, Glu102, and His140.

The protein belongs to the acireductone dioxygenase (ARD) family. In terms of assembly, monomer. The cofactor is Fe(2+). Ni(2+) serves as cofactor.

It carries out the reaction 1,2-dihydroxy-5-(methylsulfanyl)pent-1-en-3-one + O2 = 3-(methylsulfanyl)propanoate + CO + formate + 2 H(+). The catalysed reaction is 1,2-dihydroxy-5-(methylsulfanyl)pent-1-en-3-one + O2 = 4-methylsulfanyl-2-oxobutanoate + formate + 2 H(+). The protein operates within amino-acid biosynthesis; L-methionine biosynthesis via salvage pathway; L-methionine from S-methyl-5-thio-alpha-D-ribose 1-phosphate: step 5/6. In terms of biological role, catalyzes 2 different reactions between oxygen and the acireductone 1,2-dihydroxy-3-keto-5-methylthiopentene (DHK-MTPene) depending upon the metal bound in the active site. Fe-containing acireductone dioxygenase (Fe-ARD) produces formate and 2-keto-4-methylthiobutyrate (KMTB), the alpha-ketoacid precursor of methionine in the methionine recycle pathway. Ni-containing acireductone dioxygenase (Ni-ARD) produces methylthiopropionate, carbon monoxide and formate, and does not lie on the methionine recycle pathway. The protein is Acireductone dioxygenase of Hahella chejuensis (strain KCTC 2396).